Consider the following 101-residue polypeptide: Putative defensin-like protein 307 (101 aa).

A signal peptide spans 1-22 (MEKSALIFIGILLFSTCTSIMA). 3 disulfide bridges follow: C29-C49, C35-C54, and C40-C56.

Belongs to the DEFL family.

Its subcellular location is the secreted. The sequence is that of Putative defensin-like protein 307 from Arabidopsis thaliana (Mouse-ear cress).